The primary structure comprises 366 residues: Beta sliding clamp (366 aa).

The protein belongs to the beta sliding clamp family. Forms a ring-shaped head-to-tail homodimer around DNA which binds and tethers DNA polymerases and other proteins to the DNA. The DNA replisome complex has a single clamp-loading complex (3 tau and 1 each of delta, delta', psi and chi subunits) which binds 3 Pol III cores (1 core on the leading strand and 2 on the lagging strand) each with a beta sliding clamp dimer. Additional proteins in the replisome are other copies of gamma, psi and chi, Ssb, DNA helicase and RNA primase.

The protein localises to the cytoplasm. Confers DNA tethering and processivity to DNA polymerases and other proteins. Acts as a clamp, forming a ring around DNA (a reaction catalyzed by the clamp-loading complex) which diffuses in an ATP-independent manner freely and bidirectionally along dsDNA. Initially characterized for its ability to contact the catalytic subunit of DNA polymerase III (Pol III), a complex, multichain enzyme responsible for most of the replicative synthesis in bacteria; Pol III exhibits 3'-5' exonuclease proofreading activity. The beta chain is required for initiation of replication as well as for processivity of DNA replication. The sequence is that of Beta sliding clamp (dnaN) from Salmonella typhimurium (strain LT2 / SGSC1412 / ATCC 700720).